The sequence spans 218 residues: Octanoyltransferase (218 aa).

The BPL/LPL catalytic domain occupies 30 to 213 (GEIEDTLILV…YFSEVFNYDI (184 aa)). Residues 75–82 (RGGDVTYH), 143–145 (AIG), and 156–158 (GFA) each bind substrate. The Acyl-thioester intermediate role is filled by C174.

It belongs to the LipB family.

Its subcellular location is the cytoplasm. The enzyme catalyses octanoyl-[ACP] + L-lysyl-[protein] = N(6)-octanoyl-L-lysyl-[protein] + holo-[ACP] + H(+). Its pathway is protein modification; protein lipoylation via endogenous pathway; protein N(6)-(lipoyl)lysine from octanoyl-[acyl-carrier-protein]: step 1/2. In terms of biological role, catalyzes the transfer of endogenously produced octanoic acid from octanoyl-acyl-carrier-protein onto the lipoyl domains of lipoate-dependent enzymes. Lipoyl-ACP can also act as a substrate although octanoyl-ACP is likely to be the physiological substrate. The polypeptide is Octanoyltransferase (Alkaliphilus metalliredigens (strain QYMF)).